A 206-amino-acid polypeptide reads, in one-letter code: Large ribosomal subunit protein uL4 (206 aa).

The tract at residues 43-94 (ARSGNRAQKDREQVKHTTKKPWRQKGTGRARAGMSSSPLWRGGGRIFPNSPE) is disordered. Residues 58 to 70 (HTTKKPWRQKGTG) show a composition bias toward basic residues.

This sequence belongs to the universal ribosomal protein uL4 family. As to quaternary structure, part of the 50S ribosomal subunit.

Its function is as follows. One of the primary rRNA binding proteins, this protein initially binds near the 5'-end of the 23S rRNA. It is important during the early stages of 50S assembly. It makes multiple contacts with different domains of the 23S rRNA in the assembled 50S subunit and ribosome. Forms part of the polypeptide exit tunnel. The sequence is that of Large ribosomal subunit protein uL4 from Polynucleobacter asymbioticus (strain DSM 18221 / CIP 109841 / QLW-P1DMWA-1) (Polynucleobacter necessarius subsp. asymbioticus).